A 769-amino-acid chain; its full sequence is MLDSFKENEALRKYLFSGHFGLEKENIRVTSDGKLALTPHPAIFGPKEDNPYIKTDFSESQIEMITPVTDSIDAVYEWLENLHNIVSLRAENELLWPSSNPPILPAEEDIPIAEYKTPDSPDRKYREHLAKGYGKKIQLLSGIHYNFSFPEALIDGLYAEISHPNESKRDFKNRLYLKVAKYFMKNRWLLIYLTGASPVYLADFTKTNSEEVLNDGSKALHRGISLRNSNAGYKNKESLFVDYNSFDAYISSISNYIEAGKIESMREFYNPIRLKNAHTDQTVESLAKHGVEYLEIRSIDLNPLEPNGISKDELIFIHLFLIKGLLSEDRELCANNQQLADENENNIALNGLAQPAIKNCDNEEMSLADAGLLELDKMSDFIQSLIPNDNHFQAIIEKQKERLLHPEKTIAAQVQAQSAKEGYVEFHLNQAKTYMEETEALAYKLVGAEDMELSTQIIWKDAIARGIKVDVLDRAENFLRFQKGDHVEYVKQASKTSKDNYVSVLMMENKVVTKLVLAEHGIRVPFGDSFSDQALALEAFSLFEDKQIVVKPKSTNYGWGISIFKNKFTLEDYQEALNIAFSYDSSVIIEEFIPGDEFRFLVINDKVEAVLKRVPANVTGDGIHTVRQLVEEKNTDPLRGTDHLKPLEKIRTGPEETLMLSMQNLSWDSIPKAEEIIYLRENSNVSTGGDSIDYTEEMDDYFKEIAIRATQVLDAKICGVDIIVPRETIDRDKHAIIELNFNPAMHMHCFPYQGEKKKIGDKILDFLFE.

Positions 1–347 (MLDSFKENEA…QLADENENNI (347 aa)) are glutamate--cysteine ligase. An ATP-grasp domain is found at 514–768 (KLVLAEHGIR…IGDKILDFLF (255 aa)). ATP is bound at residue 541 to 599 (SLFEDKQIVVKPKSTNYGWGISIFKNKFTLEDYQEALNIAFSYDSSVIIEEFIPGDEFR). 3 residues coordinate Mg(2+): D721, E738, and N740. Mn(2+) is bound by residues D721, E738, and N740.

In the N-terminal section; belongs to the glutamate--cysteine ligase type 1 family. Type 2 subfamily. In terms of assembly, monomer. It depends on Mg(2+) as a cofactor. The cofactor is Mn(2+).

The catalysed reaction is L-cysteine + L-glutamate + ATP = gamma-L-glutamyl-L-cysteine + ADP + phosphate + H(+). It catalyses the reaction gamma-L-glutamyl-L-cysteine + glycine + ATP = glutathione + ADP + phosphate + H(+). It participates in sulfur metabolism; glutathione biosynthesis; glutathione from L-cysteine and L-glutamate: step 1/2. Its pathway is sulfur metabolism; glutathione biosynthesis; glutathione from L-cysteine and L-glutamate: step 2/2. In terms of biological role, synthesizes glutathione from L-glutamate and L-cysteine via gamma-L-glutamyl-L-cysteine. In Listeria innocua serovar 6a (strain ATCC BAA-680 / CLIP 11262), this protein is Glutathione biosynthesis bifunctional protein GshAB.